The following is a 264-amino-acid chain: Myozenin-2 (264 aa).

R53 bears the Omega-N-methylarginine mark. The tract at residues 90-135 is disordered; that stretch reads GKVDGSNLEGGSQQAPLTPPNTPDPRSPPNPDNIAPGYSGPLKEIP. S101 bears the Phosphoserine mark. A compositionally biased stretch (pro residues) spans 106-120; it reads LTPPNTPDPRSPPNP. 2 positions are modified to phosphothreonine: T107 and T111. S116 bears the Phosphoserine mark.

It belongs to the myozenin family. Interacts via its C-terminus with spectrin repeats 3 and 4 of ACTN2. Interacts with ACTN1, LDB3, MYOT and PPP3CA.

It localises to the cytoplasm. The protein localises to the myofibril. The protein resides in the sarcomere. It is found in the z line. Functionally, myozenins may serve as intracellular binding proteins involved in linking Z line proteins such as alpha-actinin, gamma-filamin, TCAP/telethonin, LDB3/ZASP and localizing calcineurin signaling to the sarcomere. Plays an important role in the modulation of calcineurin signaling. May play a role in myofibrillogenesis. This Pongo abelii (Sumatran orangutan) protein is Myozenin-2 (MYOZ2).